The sequence spans 503 residues: MKILRGVSRQMCTSRPEVRVRFAPSPTGFLHLGGLRTALYNFLFSRQRRGVFILRLEDTDQKRLVPGAAEHIEDMLEWAGIPPDESSRRGGDYGPYVQSERLHLYTEAASSLLNTGHAYYCFCSNQRLELLKKEAQRSGHAPRYDNRCRRLQPQQVEQKLAAGVPAVVRFKLHTGTEEFQDLVFGWTGHAVGAVEGDPVILKADGYPTYHLASVVDDHHMRISHVLRGCEWLISSAKHLQLYRALRWTPPTYAHLPLLLNRDGSKLSKRQGDIFLQSFRDRGVLPETLLDLVTHAGSGFSDNRMGRRLDELIRDFNISKITTHSALLDLDKLEEFSRLHLQRRIEDPQQCVWLCEELKQMVKHTHSSEISAAAVLEPEYIERVLQLRKGHISSLQDLLSSTHSYLWVRPRVSQTQLQSESAHAKDIATAVMQMVLAGGSLVSMERLSSELKQISSRTNSTHSSVMKVLRLLLSAQQRGPSVAEMMLSLGEQEVCVRLQKALEL.

The N-terminal 22 residues, 1 to 22, are a transit peptide targeting the mitochondrion; the sequence is MKILRGVSRQMCTSRPEVRVRF. Residue 21-23 participates in L-glutamate binding; that stretch reads RFA. Positions 26-34 match the 'HIGH' region motif; the sequence is PTGFLHLGG. His31 is an ATP binding site. L-glutamate contacts are provided by residues Glu57, 209–213, and Arg227; that span reads YHLAS. Residues Glu230 and 265-269 each bind ATP; that span reads KLSKR. The 'KMSKS' region signature appears at 265-269; that stretch reads KLSKR.

The protein belongs to the class-I aminoacyl-tRNA synthetase family. Glutamate--tRNA ligase type 1 subfamily.

It localises to the mitochondrion matrix. It catalyses the reaction tRNA(Glx) + L-glutamate + ATP = L-glutamyl-tRNA(Glx) + AMP + diphosphate. It carries out the reaction tRNA(Glu) + L-glutamate + ATP = L-glutamyl-tRNA(Glu) + AMP + diphosphate. The enzyme catalyses tRNA(Gln) + L-glutamate + ATP = L-glutamyl-tRNA(Gln) + AMP + diphosphate. Its function is as follows. Non-discriminating glutamyl-tRNA synthetase that catalyzes aminoacylation of both mitochondrial tRNA(Glu) and tRNA(Gln) and participates in RNA aminoacylation for mitochondrial protein translation. Attachs glutamate to tRNA(Glu) or tRNA(Gln) in a two-step reaction: glutamate is first activated by ATP to form Glu-AMP and then transferred to the acceptor end of tRNA(Glu) or tRNA(Gln). This Danio rerio (Zebrafish) protein is Nondiscriminating glutamyl-tRNA synthetase EARS2, mitochondrial.